The primary structure comprises 153 residues: Endoribonuclease YbeY (153 aa).

3 residues coordinate Zn(2+): H116, H120, and H126.

It belongs to the endoribonuclease YbeY family. Zn(2+) serves as cofactor.

It localises to the cytoplasm. Functionally, single strand-specific metallo-endoribonuclease involved in late-stage 70S ribosome quality control and in maturation of the 3' terminus of the 16S rRNA. In Paraburkholderia phymatum (strain DSM 17167 / CIP 108236 / LMG 21445 / STM815) (Burkholderia phymatum), this protein is Endoribonuclease YbeY.